The primary structure comprises 197 residues: Dehydrin DHN1 (197 aa).

Residues 1–14 show a composition bias toward polar residues; sequence MSQYQNQYGAQTGM. Disordered stretches follow at residues 1-86 and 133-197; these read MSQY…GTNP and GTEQ…CTGH. 2 tandem repeats follow at residues 16–21 and 26–31. The 2 X approximate repeats stretch occupies residues 16-31; the sequence is DEYGNPVNQVDQYGNP. Gly residues predominate over residues 74-83; the sequence is THTGGVGGYG. The stretch at 126-133 is one 2-1 repeat; sequence KIKEKIPG. Residues 126 to 190 are 2 X approximate repeats; the sequence is KIKEKIPGTE…MDKIKEKLPG (65 aa). Positions 144–160 are enriched in gly residues; it reads AGYGSTGYGASGGGIGN. The segment covering 165-188 has biased composition (basic and acidic residues); the sequence is YVREEHRVDHGEKKGIMDKIKEKL. The stretch at 183–190 is one 2-2 repeat; the sequence is KIKEKLPG.

It belongs to the plant dehydrin family. Shoots, roots, and cotyledon from dehydrating seedlings.

The protein is Dehydrin DHN1 (DHN1) of Pisum sativum (Garden pea).